Reading from the N-terminus, the 586-residue chain is Arginine--tRNA ligase (586 aa).

Residues 130–140 (ANPTGPMHVGH) carry the 'HIGH' region motif.

Belongs to the class-I aminoacyl-tRNA synthetase family. Monomer.

Its subcellular location is the cytoplasm. The enzyme catalyses tRNA(Arg) + L-arginine + ATP = L-arginyl-tRNA(Arg) + AMP + diphosphate. This chain is Arginine--tRNA ligase, found in Methylobacterium sp. (strain 4-46).